The primary structure comprises 536 residues: Nucleosome assembly protein 1-like 3 (536 aa).

2 disordered regions span residues 1–104 and 160–338; these read MAEA…DKLP and PTEE…KEDP. Residues 35-75 are compositionally biased toward low complexity; that stretch reads SNSSSSTTSCGSTGSSSSSSSSSSSSSSSSSGSSGSSSNGS. Residues 77-95 show a composition bias toward basic residues; it reads LHQKKRVPGPSRRAQRRPS. A compositionally biased stretch (acidic residues) spans 160 to 184; sequence PTEEECEWNSEEEFSGDEEMQDDTP. Composition is skewed to basic and acidic residues over residues 199 to 220 and 227 to 269; these read GKENTEVKEEVKDVPEEVPEAK and PKET…KTDS. The span at 287–300 shows a compositional bias: polar residues; that stretch reads TQANAEYTDQPTED. A compositionally biased stretch (basic and acidic residues) spans 306–324; that stretch reads PVREAQKRVPETRPEERVN.

The protein belongs to the nucleosome assembly protein (NAP) family.

It localises to the nucleus. The polypeptide is Nucleosome assembly protein 1-like 3 (Nap1l3) (Rattus norvegicus (Rat)).